The primary structure comprises 873 residues: Aminopeptidase M1-D (873 aa).

The tract at residues 96-203 (LGEGVLAMRF…MSTYLVAIVV (108 aa)) is required for membrane association. Substrate is bound by residues E136 and 269–273 (GAMEN). H305 contributes to the Zn(2+) binding site. The Proton acceptor role is filled by E306. Residues H309 and E328 each contribute to the Zn(2+) site. The short motif at 721 to 722 (LL) is the Dileucine internalization motif element.

It belongs to the peptidase M1 family. As to quaternary structure, homodimer. The cofactor is Zn(2+).

It is found in the membrane. The protein localises to the microsome membrane. The protein resides in the cytoplasm. The enzyme catalyses Release of an N-terminal amino acid, Xaa-|-Yaa- from a peptide, amide or arylamide. Xaa is preferably Ala, but may be most amino acids including Pro (slow action). When a terminal hydrophobic residue is followed by a prolyl residue, the two may be released as an intact Xaa-Pro dipeptide.. This is Aminopeptidase M1-D from Oryza sativa subsp. japonica (Rice).